We begin with the raw amino-acid sequence, 410 residues long: Peptidase T (410 aa).

His-79 contacts Zn(2+). Asp-81 is a catalytic residue. A Zn(2+)-binding site is contributed by Asp-142. Glu-176 acts as the Proton acceptor in catalysis. Glu-177, Asp-199, and His-381 together coordinate Zn(2+).

It belongs to the peptidase M20B family. The cofactor is Zn(2+).

Its subcellular location is the cytoplasm. The catalysed reaction is Release of the N-terminal residue from a tripeptide.. In terms of biological role, cleaves the N-terminal amino acid of tripeptides. The polypeptide is Peptidase T (Bacillus anthracis (strain A0248)).